The following is a 142-amino-acid chain: Protein spalt-accessory (142 aa).

The first 16 residues, 1–16 (MKLLIALFALVTAVNA), serve as a signal peptide directing secretion. The interval 75-142 (GFAGQGSPNQ…HHEHHGHHRH (68 aa)) is disordered. The span at 107-124 (GHFHENPHEYPEHHGDHH) shows a compositional bias: basic and acidic residues. Over residues 125–142 (REHHEHHGHHEHHGHHRH) the composition is skewed to basic residues.

The protein localises to the secreted. Likely to be involved in the establishment of the head. The protein is Protein spalt-accessory (sala) of Drosophila melanogaster (Fruit fly).